Here is a 92-residue protein sequence, read N- to C-terminus: cAMP-dependent protein kinase inhibitor beta (92 aa).

The tract at residues Met1–Glu26 is disordered. The segment covering Pro7 to Glu26 has biased composition (polar residues). Position 56 is a phosphoserine (Ser56). Over residues Glu70–Gly82 the composition is skewed to basic and acidic residues. The interval Glu70 to Lys92 is disordered.

It belongs to the PKI family.

In terms of biological role, extremely potent competitive inhibitor of cAMP-dependent protein kinase activity, this protein interacts with the catalytic subunit of the enzyme after the cAMP-induced dissociation of its regulatory chains. This chain is cAMP-dependent protein kinase inhibitor beta (Pkib), found in Mus musculus (Mouse).